A 236-amino-acid chain; its full sequence is NAD(P)H-hydrate epimerase (236 aa).

In terms of domain architecture, YjeF N-terminal spans 11–217 (AAALDQELMS…AIASKYGFEV (207 aa)). 61 to 65 (NNGGD) is a binding site for (6S)-NADPHX. The K(+) site is built by Asn62 and Asp123. Residues 127–133 (GFSFSGE) and Asp156 each bind (6S)-NADPHX. Ser159 contributes to the K(+) binding site.

The protein belongs to the NnrE/AIBP family. The cofactor is K(+).

The protein resides in the cytoplasm. It is found in the mitochondrion. The enzyme catalyses (6R)-NADHX = (6S)-NADHX. The catalysed reaction is (6R)-NADPHX = (6S)-NADPHX. Its function is as follows. Catalyzes the epimerization of the S- and R-forms of NAD(P)HX, a damaged form of NAD(P)H that is a result of enzymatic or heat-dependent hydration. This is a prerequisite for the S-specific NAD(P)H-hydrate dehydratase to allow the repair of both epimers of NAD(P)HX. This chain is NAD(P)H-hydrate epimerase, found in Fusarium vanettenii (strain ATCC MYA-4622 / CBS 123669 / FGSC 9596 / NRRL 45880 / 77-13-4) (Fusarium solani subsp. pisi).